An 84-amino-acid chain; its full sequence is ICP35 (84 aa).

The protein is ICP35 of Crustacea (WSSV).